Here is a 276-residue protein sequence, read N- to C-terminus: uncharacterized protein (276 aa).

This is an uncharacterized protein from Fowl adenovirus A serotype 1 (strain CELO / Phelps) (FAdV-1).